A 213-amino-acid chain; its full sequence is Phosphatidylserine decarboxylase proenzyme (213 aa).

The active-site Schiff-base intermediate with substrate; via pyruvic acid is the serine 183. Serine 183 is subject to Pyruvic acid (Ser); by autocatalysis.

It belongs to the phosphatidylserine decarboxylase family. PSD-A subfamily. In terms of assembly, heterodimer of a large membrane-associated beta subunit and a small pyruvoyl-containing alpha subunit. Requires pyruvate as cofactor. In terms of processing, is synthesized initially as an inactive proenzyme. Formation of the active enzyme involves a self-maturation process in which the active site pyruvoyl group is generated from an internal serine residue via an autocatalytic post-translational modification. Two non-identical subunits are generated from the proenzyme in this reaction, and the pyruvate is formed at the N-terminus of the alpha chain, which is derived from the carboxyl end of the proenzyme. The post-translation cleavage follows an unusual pathway, termed non-hydrolytic serinolysis, in which the side chain hydroxyl group of the serine supplies its oxygen atom to form the C-terminus of the beta chain, while the remainder of the serine residue undergoes an oxidative deamination to produce ammonia and the pyruvoyl prosthetic group on the alpha chain.

The protein resides in the cell membrane. The enzyme catalyses a 1,2-diacyl-sn-glycero-3-phospho-L-serine + H(+) = a 1,2-diacyl-sn-glycero-3-phosphoethanolamine + CO2. The protein operates within phospholipid metabolism; phosphatidylethanolamine biosynthesis; phosphatidylethanolamine from CDP-diacylglycerol: step 2/2. Functionally, catalyzes the formation of phosphatidylethanolamine (PtdEtn) from phosphatidylserine (PtdSer). The sequence is that of Phosphatidylserine decarboxylase proenzyme from Syntrophus aciditrophicus (strain SB).